We begin with the raw amino-acid sequence, 197 residues long: Small ribosomal subunit protein uS7 (197 aa).

The protein belongs to the universal ribosomal protein uS7 family.

The protein is Small ribosomal subunit protein uS7 (RPS5) of Cicer arietinum (Chickpea).